Reading from the N-terminus, the 705-residue chain is Fatty acid oxidation complex subunit alpha (705 aa).

An enoyl-CoA hydratase region spans residues 1–190 (MSEQKAFNLK…KLGVVDACVP (190 aa)). A 3-hydroxyacyl-CoA dehydrogenase region spans residues 308–705 (SKVGMVGVLG…AGEGRRFYDN (398 aa)).

This sequence in the N-terminal section; belongs to the enoyl-CoA hydratase/isomerase family. In the central section; belongs to the 3-hydroxyacyl-CoA dehydrogenase family. In terms of assembly, heterotetramer of two alpha chains (FadJ) and two beta chains (FadI).

It is found in the cytoplasm. It carries out the reaction a (3S)-3-hydroxyacyl-CoA = a (2E)-enoyl-CoA + H2O. The catalysed reaction is a 4-saturated-(3S)-3-hydroxyacyl-CoA = a (3E)-enoyl-CoA + H2O. It catalyses the reaction a (3S)-3-hydroxyacyl-CoA + NAD(+) = a 3-oxoacyl-CoA + NADH + H(+). The enzyme catalyses (3S)-3-hydroxybutanoyl-CoA = (3R)-3-hydroxybutanoyl-CoA. The protein operates within lipid metabolism; fatty acid beta-oxidation. Functionally, catalyzes the formation of a hydroxyacyl-CoA by addition of water on enoyl-CoA. Also exhibits 3-hydroxyacyl-CoA epimerase and 3-hydroxyacyl-CoA dehydrogenase activities. This Vibrio vulnificus (strain CMCP6) protein is Fatty acid oxidation complex subunit alpha.